Consider the following 265-residue polypeptide: Phosphate import ATP-binding protein PstB 2 (265 aa).

The 248-residue stretch at 13–260 folds into the ABC transporter domain; it reads FRTENLNVYY…PTKQATRDYV (248 aa). 45–52 lines the ATP pocket; that stretch reads GPSGCGKS.

The protein belongs to the ABC transporter superfamily. Phosphate importer (TC 3.A.1.7) family. As to quaternary structure, the complex is composed of two ATP-binding proteins (PstB), two transmembrane proteins (PstC and PstA) and a solute-binding protein (PstS).

It localises to the cell inner membrane. It catalyses the reaction phosphate(out) + ATP + H2O = ADP + 2 phosphate(in) + H(+). Functionally, part of the ABC transporter complex PstSACB involved in phosphate import. Responsible for energy coupling to the transport system. This is Phosphate import ATP-binding protein PstB 2 from Synechococcus sp. (strain JA-2-3B'a(2-13)) (Cyanobacteria bacterium Yellowstone B-Prime).